Here is a 144-residue protein sequence, read N- to C-terminus: Large ribosomal subunit protein uL15 (144 aa).

A disordered region spans residues 20-49 (GRGIGSGLGKTGGRGHKGQKSRSGGFHKVG). Residues 21–31 (RGIGSGLGKTG) show a composition bias toward gly residues.

This sequence belongs to the universal ribosomal protein uL15 family. Part of the 50S ribosomal subunit.

Its function is as follows. Binds to the 23S rRNA. The protein is Large ribosomal subunit protein uL15 of Neisseria meningitidis serogroup A / serotype 4A (strain DSM 15465 / Z2491).